The sequence spans 259 residues: Phosphatidylglycerol--prolipoprotein diacylglyceryl transferase (259 aa).

4 helical membrane-spanning segments follow: residues 12–32 (LSLH…VYLA), 46–66 (IIDF…IYYV), 83–103 (IWNG…VLFV), and 109–129 (VLNP…AQAI). R131 contacts a 1,2-diacyl-sn-glycero-3-phospho-(1'-sn-glycerol). 3 helical membrane-spanning segments follow: residues 167-187 (VPTF…IMVW), 194-214 (LVDG…RLVI), and 226-246 (GIRV…VFIF).

Belongs to the Lgt family.

It localises to the cell membrane. It catalyses the reaction L-cysteinyl-[prolipoprotein] + a 1,2-diacyl-sn-glycero-3-phospho-(1'-sn-glycerol) = an S-1,2-diacyl-sn-glyceryl-L-cysteinyl-[prolipoprotein] + sn-glycerol 1-phosphate + H(+). Its pathway is protein modification; lipoprotein biosynthesis (diacylglyceryl transfer). In terms of biological role, catalyzes the transfer of the diacylglyceryl group from phosphatidylglycerol to the sulfhydryl group of the N-terminal cysteine of a prolipoprotein, the first step in the formation of mature lipoproteins. This is Phosphatidylglycerol--prolipoprotein diacylglyceryl transferase from Streptococcus equi subsp. equi (strain 4047).